The chain runs to 442 residues: UDP-N-acetylmuramoylalanine--D-glutamate ligase (442 aa).

113–119 (GSNGKTT) is a binding site for ATP.

The protein belongs to the MurCDEF family.

It localises to the cytoplasm. The catalysed reaction is UDP-N-acetyl-alpha-D-muramoyl-L-alanine + D-glutamate + ATP = UDP-N-acetyl-alpha-D-muramoyl-L-alanyl-D-glutamate + ADP + phosphate + H(+). Its pathway is cell wall biogenesis; peptidoglycan biosynthesis. Functionally, cell wall formation. Catalyzes the addition of glutamate to the nucleotide precursor UDP-N-acetylmuramoyl-L-alanine (UMA). The polypeptide is UDP-N-acetylmuramoylalanine--D-glutamate ligase (Coxiella burnetii (strain Dugway 5J108-111)).